The primary structure comprises 137 residues: MAIIIDPIADMFVRMKNAISRKYYEVTLPHSAKKVKILEIFKKEGYISDFEVLTNEKSTFKEIKITLKYKGMNQNQSAISGIKRVSKPGLKVYSSSEKLPRVLSGFGTAIISTSKGLLTDKEARKANVGGEVIAFIW.

The protein belongs to the universal ribosomal protein uS8 family. In terms of assembly, part of the 30S ribosomal subunit. Contacts proteins S5 and S12.

In terms of biological role, one of the primary rRNA binding proteins, it binds directly to 16S rRNA central domain where it helps coordinate assembly of the platform of the 30S subunit. In Metamycoplasma arthritidis (strain 158L3-1) (Mycoplasma arthritidis), this protein is Small ribosomal subunit protein uS8.